We begin with the raw amino-acid sequence, 573 residues long: Glutathione hydrolase 5 proenzyme (573 aa).

Topologically, residues Met1 to Thr8 are cytoplasmic. A helical; Signal-anchor for type II membrane protein transmembrane segment spans residues Val9–Leu29. Over Ser30–Tyr573 the chain is Extracellular. An N-linked (GlcNAc...) asparagine glycan is attached at Asn98. Residue Arg110 coordinates L-glutamate. N-linked (GlcNAc...) asparagine glycosylation is found at Asn185, Asn204, Asn277, Asn303, Asn347, and Asn378. Catalysis depends on Thr389, which acts as the Nucleophile. Residues Thr407, Glu428, and Ser454 to Ser455 contribute to the L-glutamate site.

The protein belongs to the gamma-glutamyltransferase family. Heterodimer composed of the light and heavy chains. The active site is located in the light chain. In terms of processing, cleaved by autocatalysis into a large and a small subunit. Post-translationally, glycosylated. Very low level of expression. Detected in spleen lymphocytes, medullary and paracortical thymic lymphocytes, lung interstitial cells, bronchial epithelium, proximal tubules in kidney, crypt cells in small intestine, neurons in brain stem and cerebral cortex and in Purkinje cells. In terms of tissue distribution, very low expression.

The protein localises to the membrane. The catalysed reaction is glutathione + H2O = L-cysteinylglycine + L-glutamate. It carries out the reaction an S-substituted glutathione + H2O = an S-substituted L-cysteinylglycine + L-glutamate. It catalyses the reaction leukotriene C4 + H2O = leukotriene D4 + L-glutamate. The enzyme catalyses S-[(2E,6E,10E)-geranylgeranyl]-L-glutathione + H2O = S-[(2E,6E,10E)-geranylgeranyl]-L-cysteinylglycine + L-glutamate. The catalysed reaction is an N-terminal (5-L-glutamyl)-[peptide] + an alpha-amino acid = 5-L-glutamyl amino acid + an N-terminal L-alpha-aminoacyl-[peptide]. It functions in the pathway lipid metabolism; leukotriene D4 biosynthesis. Its pathway is sulfur metabolism; glutathione metabolism. Inhibited by serine-borate. In terms of biological role, cleaves the gamma-glutamyl bond of extracellular glutathione tripeptide (gamma-Glu-Cys-Gly) and certain glutathione conjugates. Hydrolyzes glutathione releasing L-Glu and Cys-Gly dipeptide which is further metabolized to maintain extracellular cysteine levels but also to provide cysteine necessary for intracellular glutathione synthesis. Among glutathione-S-conjugates metabolizes leukotriene C4 (LTC4) and S-geranylgeranyl-glutathione (GGG), but is inactive toward gamma-glutamyl leucine. Converts extracellular LTC4 to LTD4 during acute inflammatory response. Acts as a negative regulator of GGG bioactivity. GGT5 (via GGG catabolism) and ABCC1 (via extracellular transport) establish GGG gradients within lymphoid tissues to position P2RY8-positive lymphocytes at germinal centers in lymphoid follicles and restrict their chemotactic transmigration from blood vessels to bone marrow parenchyma. The transpeptidation reaction, i.e. the transfer of gamma-glutamyl moiety to an acceptor molecule to yield a new gamma-glutamyl compound requires high concentration of dipeptide acceptor and is considered nonphysiological. The polypeptide is Glutathione hydrolase 5 proenzyme (Ggt5) (Mus musculus (Mouse)).